The chain runs to 647 residues: Acetyl-coenzyme A synthetase (647 aa).

Residues 190–193 (RGGR), threonine 308, and asparagine 332 each bind CoA. ATP is bound by residues 384–386 (GEP), 408–413 (DTWWQT), aspartate 497, and arginine 512. Serine 520 contributes to the CoA binding site. Residue arginine 523 participates in ATP binding. Positions 534, 536, and 539 each coordinate Mg(2+). Arginine 581 lines the CoA pocket. Position 606 is an N6-acetyllysine (lysine 606).

The protein belongs to the ATP-dependent AMP-binding enzyme family. Mg(2+) serves as cofactor. Post-translationally, acetylated. Deacetylation by the SIR2-homolog deacetylase activates the enzyme.

It carries out the reaction acetate + ATP + CoA = acetyl-CoA + AMP + diphosphate. Functionally, catalyzes the conversion of acetate into acetyl-CoA (AcCoA), an essential intermediate at the junction of anabolic and catabolic pathways. AcsA undergoes a two-step reaction. In the first half reaction, AcsA combines acetate with ATP to form acetyl-adenylate (AcAMP) intermediate. In the second half reaction, it can then transfer the acetyl group from AcAMP to the sulfhydryl group of CoA, forming the product AcCoA. The protein is Acetyl-coenzyme A synthetase of Parvibaculum lavamentivorans (strain DS-1 / DSM 13023 / NCIMB 13966).